The following is a 115-amino-acid chain: NAD(P)H-quinone oxidoreductase subunit M (115 aa).

This sequence belongs to the complex I NdhM subunit family. As to quaternary structure, NDH-1 can be composed of about 15 different subunits; different subcomplexes with different compositions have been identified which probably have different functions.

It localises to the cellular thylakoid membrane. The catalysed reaction is a plastoquinone + NADH + (n+1) H(+)(in) = a plastoquinol + NAD(+) + n H(+)(out). It carries out the reaction a plastoquinone + NADPH + (n+1) H(+)(in) = a plastoquinol + NADP(+) + n H(+)(out). Its function is as follows. NDH-1 shuttles electrons from an unknown electron donor, via FMN and iron-sulfur (Fe-S) centers, to quinones in the respiratory and/or the photosynthetic chain. The immediate electron acceptor for the enzyme in this species is believed to be plastoquinone. Couples the redox reaction to proton translocation, and thus conserves the redox energy in a proton gradient. Cyanobacterial NDH-1 also plays a role in inorganic carbon-concentration. This Prochlorococcus marinus (strain SARG / CCMP1375 / SS120) protein is NAD(P)H-quinone oxidoreductase subunit M.